A 271-amino-acid polypeptide reads, in one-letter code: Formamidopyrimidine-DNA glycosylase (271 aa).

Catalysis depends on Pro2, which acts as the Schiff-base intermediate with DNA. Glu3 acts as the Proton donor in catalysis. Lys58 functions as the Proton donor; for beta-elimination activity in the catalytic mechanism. Positions 91, 110, and 152 each coordinate DNA. The FPG-type zinc finger occupies Ser237–Lys271. Residue Arg261 is the Proton donor; for delta-elimination activity of the active site.

It belongs to the FPG family. In terms of assembly, monomer. Zn(2+) is required as a cofactor.

It catalyses the reaction Hydrolysis of DNA containing ring-opened 7-methylguanine residues, releasing 2,6-diamino-4-hydroxy-5-(N-methyl)formamidopyrimidine.. The catalysed reaction is 2'-deoxyribonucleotide-(2'-deoxyribose 5'-phosphate)-2'-deoxyribonucleotide-DNA = a 3'-end 2'-deoxyribonucleotide-(2,3-dehydro-2,3-deoxyribose 5'-phosphate)-DNA + a 5'-end 5'-phospho-2'-deoxyribonucleoside-DNA + H(+). In terms of biological role, involved in base excision repair of DNA damaged by oxidation or by mutagenic agents. Acts as a DNA glycosylase that recognizes and removes damaged bases. Has a preference for oxidized purines, such as 7,8-dihydro-8-oxoguanine (8-oxoG). Has AP (apurinic/apyrimidinic) lyase activity and introduces nicks in the DNA strand. Cleaves the DNA backbone by beta-delta elimination to generate a single-strand break at the site of the removed base with both 3'- and 5'-phosphates. This is Formamidopyrimidine-DNA glycosylase from Geotalea daltonii (strain DSM 22248 / JCM 15807 / FRC-32) (Geobacter daltonii).